The sequence spans 475 residues: Protein nucleotidyltransferase YdiU (475 aa).

Residues Gly-82, Gly-84, Arg-85, Lys-105, Asp-117, Gly-118, Arg-168, and Arg-175 each coordinate ATP. Asp-240 (proton acceptor) is an active-site residue. Residues Asn-241 and Asp-250 each coordinate Mg(2+). ATP is bound at residue Asp-250.

The protein belongs to the SELO family. Mg(2+) is required as a cofactor. Mn(2+) serves as cofactor.

It carries out the reaction L-seryl-[protein] + ATP = 3-O-(5'-adenylyl)-L-seryl-[protein] + diphosphate. The catalysed reaction is L-threonyl-[protein] + ATP = 3-O-(5'-adenylyl)-L-threonyl-[protein] + diphosphate. It catalyses the reaction L-tyrosyl-[protein] + ATP = O-(5'-adenylyl)-L-tyrosyl-[protein] + diphosphate. The enzyme catalyses L-histidyl-[protein] + UTP = N(tele)-(5'-uridylyl)-L-histidyl-[protein] + diphosphate. It carries out the reaction L-seryl-[protein] + UTP = O-(5'-uridylyl)-L-seryl-[protein] + diphosphate. The catalysed reaction is L-tyrosyl-[protein] + UTP = O-(5'-uridylyl)-L-tyrosyl-[protein] + diphosphate. Functionally, nucleotidyltransferase involved in the post-translational modification of proteins. It can catalyze the addition of adenosine monophosphate (AMP) or uridine monophosphate (UMP) to a protein, resulting in modifications known as AMPylation and UMPylation. This is Protein nucleotidyltransferase YdiU from Aeromonas salmonicida (strain A449).